We begin with the raw amino-acid sequence, 579 residues long: Adenine deaminase (579 aa).

Belongs to the metallo-dependent hydrolases superfamily. Adenine deaminase family. Mn(2+) is required as a cofactor.

It carries out the reaction adenine + H2O + H(+) = hypoxanthine + NH4(+). The polypeptide is Adenine deaminase (Listeria innocua serovar 6a (strain ATCC BAA-680 / CLIP 11262)).